The chain runs to 313 residues: Ribosomal RNA small subunit methyltransferase H (313 aa).

S-adenosyl-L-methionine-binding positions include 35-37 (GGH), D55, F80, D102, and Q109.

This sequence belongs to the methyltransferase superfamily. RsmH family.

Its subcellular location is the cytoplasm. The catalysed reaction is cytidine(1402) in 16S rRNA + S-adenosyl-L-methionine = N(4)-methylcytidine(1402) in 16S rRNA + S-adenosyl-L-homocysteine + H(+). Specifically methylates the N4 position of cytidine in position 1402 (C1402) of 16S rRNA. This is Ribosomal RNA small subunit methyltransferase H from Shewanella denitrificans (strain OS217 / ATCC BAA-1090 / DSM 15013).